Consider the following 435-residue polypeptide: MEERTFSRPAASATVLVGTQFGDEGKGKLVDYLSDQYDIVVRYQGGANAGHTICFDGKTVVLHLIPSGIFNKDCICVIGNGVVIDPNALMEEIQKVEELGYDVKGRLFISHNAHLIMPYHKRLDSLSESCLSGDQKIGTTGRGIGPSYEDKFARHGIRVVDLLNPKVLEEKLRDNIEAKNKLICKVYEKEEIDVDAIIGEYEAFDKVIDPYVTNTQLYLNRQIKAGKTVLLEGAQGCLLDVDHGTYPFVTSSNPTSGGACTGSGVAPNHIGKVIGVCKAYMTRVGNGDFPTELEDETGEKLGEIGHEFGATTGRKRRCGWLDLVALRYSLTISGVTELALTKLDVLDTFEEIKVCTSYMLDGKEIFDFPTEHQTLCRVQPVYKSLKGWMASNANAKSFAEMHPNAQAYVNFLEEATGVPVTFISVGPGRDETVFK.

Residues 22–28 (GDEGKGK) and 50–52 (GHT) contribute to the GTP site. Aspartate 23 (proton acceptor) is an active-site residue. Positions 23 and 50 each coordinate Mg(2+). IMP is bound by residues 23 to 26 (DEGK), 48 to 51 (NAGH), threonine 140, arginine 154, glutamine 235, threonine 250, and arginine 314. Histidine 51 (proton donor) is an active-site residue. 310 to 316 (ATTGRKR) contacts substrate. Residues arginine 316, 342–344 (KLD), and 424–426 (SVG) contribute to the GTP site.

Belongs to the adenylosuccinate synthetase family. Homodimer. Mg(2+) serves as cofactor.

It localises to the cytoplasm. It catalyses the reaction IMP + L-aspartate + GTP = N(6)-(1,2-dicarboxyethyl)-AMP + GDP + phosphate + 2 H(+). It functions in the pathway purine metabolism; AMP biosynthesis via de novo pathway; AMP from IMP: step 1/2. Functionally, plays an important role in the de novo pathway of purine nucleotide biosynthesis. Catalyzes the first committed step in the biosynthesis of AMP from IMP. The chain is Adenylosuccinate synthetase from Chlorobaculum parvum (strain DSM 263 / NCIMB 8327) (Chlorobium vibrioforme subsp. thiosulfatophilum).